Reading from the N-terminus, the 1052-residue chain is Fibroblast growth factor receptor homolog 2 (1052 aa).

The first 19 residues, 1–19, serve as a signal peptide directing secretion; that stretch reads MAKVPITLVMIIAIVSAAA. Over 20-600 the chain is Extracellular; it reads DLGCDYGHHR…EIYALLHAHP (581 aa). 3 consecutive Ig-like C2-type domains span residues 23–117, 124–230, and 240–340; these read CDYG…IASF, PALP…PTQL, and PMLK…RTVA. Residues cysteine 30 and cysteine 90 are joined by a disulfide bond. 6 N-linked (GlcNAc...) asparagine glycosylation sites follow: asparagine 99, asparagine 137, asparagine 175, asparagine 181, asparagine 249, and asparagine 257. A disulfide bridge connects residues cysteine 164 and cysteine 217. Cysteine 262 and cysteine 329 form a disulfide bridge. The span at 358 to 372 shows a compositional bias: low complexity; the sequence is TTTTTVASPIPTAST. The interval 358-393 is disordered; it reads TTTTTVASPIPTASTGEDNDDDVENPAAEASGGVGP. 2 consecutive Ig-like C2-type domains span residues 393 to 478 and 487 to 585; these read PPVF…FSVQ and PIIV…RVVS. Cysteine 416 and cysteine 462 are disulfide-bonded. Asparagine 423, asparagine 444, asparagine 494, asparagine 500, asparagine 526, asparagine 541, asparagine 546, asparagine 555, and asparagine 576 each carry an N-linked (GlcNAc...) asparagine glycan. The cysteines at positions 507 and 566 are disulfide-linked. Residues 601–626 form a helical membrane-spanning segment; the sequence is LGFTLAAITIVALFLLGSAFITFMLR. Topologically, residues 627-1052 are cytoplasmic; that stretch reads RLRREKLLKL…LRYQYTYKFN (426 aa). In terms of domain architecture, Protein kinase spans 712–1000; that stretch reads LSLGSILGEG…ELVESFDGIL (289 aa). ATP is bound by residues 718–726 and lysine 748; that span reads LGEGAFGRV. Residue aspartate 864 is the Proton acceptor of the active site. The residue at position 895 (tyrosine 895) is a Phosphotyrosine; by autocatalysis. The interval 1017 to 1038 is disordered; sequence PMLETPPSSGDEDDGSDTETFR.

This sequence belongs to the protein kinase superfamily. Tyr protein kinase family. Fibroblast growth factor receptor subfamily. In terms of tissue distribution, during embryogenesis, expression is seen in mesoderm, endodermal precursor cells, CNS midline cells and trachea and salivary duct ectodermal cells.

It is found in the membrane. The enzyme catalyses L-tyrosyl-[protein] + ATP = O-phospho-L-tyrosyl-[protein] + ADP + H(+). Functionally, may be required for patterning of muscle precursor cells: generation of mesodermal and endodermal layers, invaginations of various types of cells, and CNS formation. Essential for the ability of the migrating tracheal and midline cells to recognize external guiding cues. In Drosophila melanogaster (Fruit fly), this protein is Fibroblast growth factor receptor homolog 2 (btl).